The primary structure comprises 630 residues: Probable potassium transport system protein Kup 2 (630 aa).

The next 12 membrane-spanning stretches (helical) occupy residues 17–37, 56–76, 108–128, 145–165, 176–196, 214–234, 255–275, 293–313, 345–365, 375–395, 402–422, and 427–447; these read FWAL…TSPL, VIVL…VTAK, VFLM…SMIT, PALE…LFAF, AFGP…LIHI, FMLS…LAVT, WLFF…ALVL, FLVP…QAVI, IYLP…VLLF, YGIA…VVIW, PAAA…FFSA, and LLEG…LIWV.

It belongs to the HAK/KUP transporter (TC 2.A.72) family.

The protein resides in the cell inner membrane. The enzyme catalyses K(+)(in) + H(+)(in) = K(+)(out) + H(+)(out). Functionally, transport of potassium into the cell. Likely operates as a K(+):H(+) symporter. The polypeptide is Probable potassium transport system protein Kup 2 (Rhodopseudomonas palustris (strain BisB18)).